An 819-amino-acid polypeptide reads, in one-letter code: Regulator of G-protein signaling rgs-7 (819 aa).

A compositionally biased stretch (acidic residues) spans 1–11; sequence MSDEDADEYDD. 3 disordered regions span residues 1 to 51, 112 to 135, and 149 to 259; these read MSDE…EMLW, GDDSSFRSRDRFVPPRRPRMGYGS, and SSTY…HNNE. Positions 32–44 are enriched in polar residues; the sequence is YQDTTESTGPSEA. Basic and acidic residues predominate over residues 112 to 124; that stretch reads GDDSSFRSRDRFV. Over residues 149–166 the composition is skewed to low complexity; sequence SSTYSSSSEAHRLSSLRA. Residues 173-185 show a composition bias toward polar residues; sequence QLTSTTTSFQPLS. Over residues 213–223 the composition is skewed to basic residues; sequence RMYRKNPKYRR. A compositionally biased stretch (basic and acidic residues) spans 234–259; the sequence is SRLEESTSQESERAVTPESWMEHNNE. In terms of domain architecture, C2 spans 290-429; it reads KHKDIRGIIF…KASQVVGDPF (140 aa). Disordered regions lie at residues 515–594 and 617–640; these read YRST…DDNG and FTFSPKHSSSKTNLRQLNGREEDK. Polar residues-rich tracts occupy residues 517–533, 559–568, and 617–632; these read STGSSDMRGRSTNNLLD, PSITTTTSEN, and FTFSPKHSSSKTNLRQ. Residues 682 to 800 enclose the RGS domain; it reads SFESLLNNKF…LRDRLFLDLL (119 aa).

As to quaternary structure, interacts with egl-30.

In terms of biological role, inhibits signal transduction by increasing the GTPase activity of G protein alpha subunit egl-30 (G-alpha(q)), thereby driving it into its inactive GDP-bound form. May organize egl-30 into a stable multiprotein signaling complex, and thereby persistently inhibit egl-30 when triggered by calcium or phospholipids. This is Regulator of G-protein signaling rgs-7 (rgs-7) from Caenorhabditis elegans.